A 148-amino-acid polypeptide reads, in one-letter code: Secretory phospholipase A2 (148 aa).

The first 23 residues, 1–23 (MKLSVLLALGASSLAAAAPAATA), serve as a signal peptide directing secretion. Asn-61 is a glycosylation site (N-linked (GlcNAc...) asparagine). Cys-62 and Cys-78 are oxidised to a cystine. His-81 is an active-site residue. Asp-82 contacts Ca(2+).

Belongs to the phospholipase A2 family. Ca(2+) serves as cofactor.

The protein resides in the secreted. The enzyme catalyses a 1,2-diacyl-sn-glycero-3-phosphocholine + H2O = a 1-acyl-sn-glycero-3-phosphocholine + a fatty acid + H(+). Secretory phospholipase that catalyzes the calcium-dependent hydrolysis of the 2-acyl groups in 3-sn-phosphoglycerides. Increases the ability to utilize host-derived nutrients and lipids, and promotes lipid dropplets accumulation. Plays a role in virulence. This Arthroderma benhamiae (strain ATCC MYA-4681 / CBS 112371) (Trichophyton mentagrophytes) protein is Secretory phospholipase A2.